The primary structure comprises 670 residues: Probable membrane-anchored ferredoxin csal_0991 (670 aa).

The next 5 membrane-spanning stretches (helical) occupy residues 2-22, 68-90, 94-113, 135-155, and 159-179; these read LDIL…IGAV, VATA…LGLA, LGWL…LFVA, LMAF…VLPA, and GWLV…ELVF. 2 4Fe-4S ferredoxin-type domains span residues 241 to 271 and 316 to 347; these read WNQL…PLNP and GTAL…HVDA. Residues C250, C253, C256, C260, C328, C331, C334, and C338 each coordinate [4Fe-4S] cluster. The tract at residues 648–670 is disordered; the sequence is NTPPATPASHDTAASQATEEVLS. Residues 659-670 show a composition bias toward polar residues; that stretch reads TAASQATEEVLS.

The cofactor is [4Fe-4S] cluster.

Its subcellular location is the cell inner membrane. In terms of biological role, participates in the electron transfer process during N,N-dimethylglycine (DMG) degradation to sarcosine. Probably transfers the electrons from N,N-dimethylglycine/sarcosine dehydrogenase (DMGDH) to the electron transfer flavoprotein (ETF) EtfA-EtfB. The sequence is that of Probable membrane-anchored ferredoxin csal_0991 from Chromohalobacter salexigens (strain ATCC BAA-138 / DSM 3043 / CIP 106854 / NCIMB 13768 / 1H11).